Consider the following 272-residue polypeptide: MSTIAESARIHPMAVVEDGATIGEGVKIGPFCHVGPHVVLHANVELLSHAIVTGRTVIGKGTRIFPMAVVGGDPQSVHHGGEETTLTVGANCTIREGVTMNTGTADFGGQTIVGDNNLFLANSHVAHDCRVGNHVIMSNNVMLAGHVVIEDRVILGGGSAVHQFTRVGRQAFVGGLSAVSYDVIPYGMLNGNPGLLSGLNVVGMTRAGVDRAVIHRVRRAYKSIFEGPGSVRENAAAIREEYADCEQAVHILDFIAADSDRALSSPTRGQKG.

The protein belongs to the transferase hexapeptide repeat family. LpxA subfamily. In terms of assembly, homotrimer.

The protein resides in the cytoplasm. It catalyses the reaction a (3R)-hydroxyacyl-[ACP] + UDP-N-acetyl-alpha-D-glucosamine = a UDP-3-O-[(3R)-3-hydroxyacyl]-N-acetyl-alpha-D-glucosamine + holo-[ACP]. It functions in the pathway glycolipid biosynthesis; lipid IV(A) biosynthesis; lipid IV(A) from (3R)-3-hydroxytetradecanoyl-[acyl-carrier-protein] and UDP-N-acetyl-alpha-D-glucosamine: step 1/6. Involved in the biosynthesis of lipid A, a phosphorylated glycolipid that anchors the lipopolysaccharide to the outer membrane of the cell. This Rhizobium johnstonii (strain DSM 114642 / LMG 32736 / 3841) (Rhizobium leguminosarum bv. viciae) protein is Acyl-[acyl-carrier-protein]--UDP-N-acetylglucosamine O-acyltransferase.